The primary structure comprises 543 residues: Chaperonin GroEL 2 (543 aa).

ATP contacts are provided by residues 29–32 (TLGP), 86–90 (DGTTT), G413, 479–481 (NAA), and D495.

This sequence belongs to the chaperonin (HSP60) family. In terms of assembly, forms a cylinder of 14 subunits composed of two heptameric rings stacked back-to-back. Interacts with the co-chaperonin GroES.

The protein resides in the cytoplasm. It catalyses the reaction ATP + H2O + a folded polypeptide = ADP + phosphate + an unfolded polypeptide.. In terms of biological role, together with its co-chaperonin GroES, plays an essential role in assisting protein folding. The GroEL-GroES system forms a nano-cage that allows encapsulation of the non-native substrate proteins and provides a physical environment optimized to promote and accelerate protein folding. The chain is Chaperonin GroEL 2 from Synechococcus sp. (strain CC9311).